We begin with the raw amino-acid sequence, 419 residues long: Putative BTB/POZ domain-containing protein L85 (419 aa).

A BTB domain is found at 16–89 (TDLTIVLKDD…FYDKTSTNSE (74 aa)). Residues 250–290 (SSSNDSDEDASETESEHNSETESEHNSETESEHNSETESKH) form a disordered region. Basic and acidic residues predominate over residues 263–290 (ESEHNSETESEHNSETESEHNSETESKH).

It belongs to the mimivirus BTB/WD family.

The protein is Putative BTB/POZ domain-containing protein L85 of Acanthamoeba polyphaga (Amoeba).